The chain runs to 557 residues: Potassium-transporting ATPase potassium-binding subunit (557 aa).

The next 12 membrane-spanning stretches (helical) occupy residues 5-25, 63-83, 132-152, 170-190, 253-273, 283-303, 329-349, 356-376, 379-399, 416-436, 484-504, and 526-546; these read GFLL…PLGS, LCAI…MLLG, GLTV…FAFI, LLRI…LFFI, FVQM…FGEV, LLWA…WAEV, VLVS…AVIA, ALGG…FGGV, GLYG…LMIG, LTAL…ALAM, LLAF…MAIA, and LFVG…FIPA.

The protein belongs to the KdpA family. The system is composed of three essential subunits: KdpA, KdpB and KdpC.

The protein resides in the cell inner membrane. Its function is as follows. Part of the high-affinity ATP-driven potassium transport (or Kdp) system, which catalyzes the hydrolysis of ATP coupled with the electrogenic transport of potassium into the cytoplasm. This subunit binds the periplasmic potassium ions and delivers the ions to the membrane domain of KdpB through an intramembrane tunnel. The protein is Potassium-transporting ATPase potassium-binding subunit of Shigella flexneri.